Here is a 165-residue protein sequence, read N- to C-terminus: Mediator of RNA polymerase II transcription subunit 10 (165 aa).

Disordered stretches follow at residues 54-81 (SLHT…DPAL) and 143-165 (LRGE…RERG). Over residues 62–77 (TASTTAPNQYQSTNPN) the composition is skewed to polar residues.

The protein belongs to the Mediator complex subunit 10 family. Component of the Mediator complex.

The protein localises to the nucleus. Its function is as follows. Component of the Mediator complex, a coactivator involved in the regulated transcription of nearly all RNA polymerase II-dependent genes. Mediator functions as a bridge to convey information from gene-specific regulatory proteins to the basal RNA polymerase II transcription machinery. Mediator is recruited to promoters by direct interactions with regulatory proteins and serves as a scaffold for the assembly of a functional preinitiation complex with RNA polymerase II and the general transcription factors. The chain is Mediator of RNA polymerase II transcription subunit 10 (nut2) from Emericella nidulans (strain FGSC A4 / ATCC 38163 / CBS 112.46 / NRRL 194 / M139) (Aspergillus nidulans).